The primary structure comprises 211 residues: tRNA (guanine-N(7)-)-methyltransferase (211 aa).

The S-adenosyl-L-methionine site is built by Glu-44, Asp-69, Asp-96, and Asp-118. The active site involves Asp-118. Residue Lys-122 participates in substrate binding. The interval 124-129 (RHEKRR) is interaction with RNA. Substrate contacts are provided by residues Asp-154 and 191–194 (TEYE).

Belongs to the class I-like SAM-binding methyltransferase superfamily. TrmB family.

The catalysed reaction is guanosine(46) in tRNA + S-adenosyl-L-methionine = N(7)-methylguanosine(46) in tRNA + S-adenosyl-L-homocysteine. Its pathway is tRNA modification; N(7)-methylguanine-tRNA biosynthesis. Its function is as follows. Catalyzes the formation of N(7)-methylguanine at position 46 (m7G46) in tRNA. The chain is tRNA (guanine-N(7)-)-methyltransferase from Streptococcus pneumoniae (strain JJA).